Consider the following 236-residue polypeptide: Small ribosomal subunit protein uS3 (236 aa).

The region spanning 39–107 (IREVLEKQLK…EVHLNIVEVR (69 aa)) is the KH type-2 domain. The disordered stretch occupies residues 214–236 (ASERRALEGGDSGGGRSRRDDRG).

Belongs to the universal ribosomal protein uS3 family. Part of the 30S ribosomal subunit. Forms a tight complex with proteins S10 and S14.

Binds the lower part of the 30S subunit head. Binds mRNA in the 70S ribosome, positioning it for translation. This chain is Small ribosomal subunit protein uS3, found in Parvibaculum lavamentivorans (strain DS-1 / DSM 13023 / NCIMB 13966).